The chain runs to 613 residues: Ethylene response sensor 1 (613 aa).

Helical transmembrane passes span 23–43 (ISDA…IYFV), 58–78 (FGAF…MFFM), and 95–115 (AVVS…LLSV). Cu cation-binding residues include Cys65 and His69. Residues 158-307 (DRHTILRTTL…NVADQVAVAL (150 aa)) form the GAF domain. The region spanning 350-589 (VMNHEMRTPM…SFIIRLGICN (240 aa)) is the Histidine kinase domain. His353 is modified (phosphohistidine; by autocatalysis).

Belongs to the ethylene receptor family. Homodimer; disulfide-linked. Heteromer with ETR1. Cu cation serves as cofactor. Autophosphorylated on both His and Ser residues in the presence of manganese. Loss of His autophosphorylation in the presence of both manganese and magnesium. Expressed in etiolated seedlings, leaves, stems, roots, flowers, embryos, anthers, carpels and ovules.

The protein resides in the endoplasmic reticulum membrane. The enzyme catalyses ATP + protein L-histidine = ADP + protein N-phospho-L-histidine.. In terms of biological role, ethylene receptor related to bacterial two-component regulators. Acts as a redundant negative regulator of ethylene signaling. The polypeptide is Ethylene response sensor 1 (ERS1) (Arabidopsis thaliana (Mouse-ear cress)).